The chain runs to 579 residues: Folliculin (579 aa).

The segment at 31–82 is disordered; sequence QGAGSGDSPDQVEQAEEEEGGIQMSSRVRAHSPAEGASSESSSPGPKKSDMC. Ser62 and Ser73 each carry phosphoserine. The segment covering 63–76 has biased composition (low complexity); the sequence is PAEGASSESSSPGP. Residues 86–242 enclose the uDENN FLCN/SMCR8-type domain; the sequence is RSLAVGHPGY…RNGNAARSLT (157 aa). A coiled-coil region spans residues 287 to 310; it reads EKLADLEEESESWDNSEAEEEEKA. Over residues 294-308 the composition is skewed to acidic residues; sequence EESESWDNSEAEEEE. Positions 294–323 are disordered; sequence EESESWDNSEAEEEEKAPVTPEGAEGRELT. Phosphoserine is present on residues Ser302, Ser406, Ser537, Ser542, and Ser571. Residues 339–491 enclose the cDENN FLCN/SMCR8-type domain; that stretch reads QPPKLTGFKS…ILNKIEAALT (153 aa). The dDENN FLCN/SMCR8-type domain occupies 493–558; it reads QNLSVDVVDQ…LLKFWMTGLS (66 aa).

This sequence belongs to the folliculin family. Interacts (via C-terminus) with FNIP1 or FNIP2 (via C-terminus). Component of the lysosomal folliculin complex (LFC), composed of FLCN, FNIP1 (or FNIP2), RagA/RRAGA or RagB/RRAGB GDP-bound, RagC/RRAGC or RagD/RRAGD GTP-bound, and Ragulator. Interaction with FNIP1 or FNIP2 mediates indirect interaction with the PRKAA1, PRKAB1 and PRKAG1 subunits of 5'-AMP-activated protein kinase (AMPK). Interacts with HSP90AA1 in the presence of FNIP1. Interacts with HSP70, STUB1, CDC37, AHSA1, CCT2, STIP1, PTGES3 and PPP5C. Interacts with GABARAP; interaction takes place in the presence of FNIP1 and/or FNIP2. Interacts with RILP; the interaction is direct and promotes association between RILP and RAB34. Interacts with KIF3A and KIF3B. Interacts with lactate dehydrogenase LDHA, but not LDHB; the interaction is direct, may preferentially bind LDHA dimers rather than tetramers, and regulates LDHA activity, acting as an uncompetitive inhibitor. Phosphorylation by ULK1 modulates the interaction with GABARAP and is required to regulate autophagy. In terms of tissue distribution, highly expressed in adult heart, pancreas, and prostate with moderate expression in adult brain, kidney, liver, adipose tissue and lung.

The protein localises to the lysosome membrane. Its subcellular location is the cytoplasm. The protein resides in the cytosol. It localises to the cell projection. It is found in the cilium. The protein localises to the cytoskeleton. Its subcellular location is the microtubule organizing center. The protein resides in the centrosome. It localises to the spindle. It is found in the nucleus. With respect to regulation, GTPase-activating activity is inhibited in the folliculin complex (LFC), which stabilizes the GDP-bound state of RagA/RRAGA (or RagB/RRAGB), because Arg-164 is located far from the RagC/RRAGC or RagD/RRAGD nucleotide pocket. Disassembly of the LFC complex upon amino acid restimulation liberates the GTPase-activating activity. Functionally, multi-functional protein, involved in both the cellular response to amino acid availability and in the regulation of glycolysis. GTPase-activating protein that plays a key role in the cellular response to amino acid availability through regulation of the non-canonical mTORC1 signaling cascade controlling the MiT/TFE factors TFEB and TFE3. Activates mTORC1 by acting as a GTPase-activating protein: specifically stimulates GTP hydrolysis by RagC/RRAGC or RagD/RRAGD, promoting the conversion to the GDP-bound state of RagC/RRAGC or RagD/RRAGD, and thereby activating the kinase activity of mTORC1. The GTPase-activating activity is inhibited during starvation and activated in presence of nutrients. Acts as a key component for non-canonical mTORC1-dependent control of the MiT/TFE factors TFEB and TFE3, while it is not involved in mTORC1-dependent phosphorylation of canonical RPS6KB1/S6K1 and EIF4EBP1/4E-BP1. In low-amino acid conditions, the lysosomal folliculin complex (LFC) is formed on the membrane of lysosomes, which inhibits the GTPase-activating activity of FLCN, inactivates mTORC1 and maximizes nuclear translocation of TFEB and TFE3. Upon amino acid restimulation, RagA/RRAGA (or RagB/RRAGB) nucleotide exchange promotes disassembly of the LFC complex and liberates the GTPase-activating activity of FLCN, leading to activation of mTORC1 and subsequent cytoplasmic retention of TFEB and TFE3. Indirectly acts as a positive regulator of Wnt signaling by promoting mTOR-dependent cytoplasmic retention of MiT/TFE factor TFE3. Required for the exit of hematopoietic stem cell from pluripotency by promoting mTOR-dependent cytoplasmic retention of TFE3, thereby increasing Wnt signaling. Involved in the control of embryonic stem cells differentiation; together with LAMTOR1 it is necessary to recruit and activate RagC/RRAGC and RagD/RRAGD at the lysosomes, and to induce exit of embryonic stem cells from pluripotency via non-canonical, mTOR-independent TFE3 inactivation. Acts as an inhibitor of browning of adipose tissue by regulating mTOR-dependent cytoplasmic retention of TFE3. In response to flow stress, regulates STK11/LKB1 accumulation and mTORC1 activation through primary cilia: may act by recruiting STK11/LKB1 to primary cilia for activation of AMPK resided at basal bodies, causing mTORC1 down-regulation. Together with FNIP1 and/or FNIP2, regulates autophagy: following phosphorylation by ULK1, interacts with GABARAP and promotes autophagy. Required for starvation-induced perinuclear clustering of lysosomes by promoting association of RILP with its effector RAB34. Regulates glycolysis by binding to lactate dehydrogenase LDHA, acting as an uncompetitive inhibitor. The protein is Folliculin of Mus musculus (Mouse).